The chain runs to 862 residues: Active breakpoint cluster region-related protein (862 aa).

Positions 29–84 (YDAEGNEEHKNSREGSETMPYIDESPTMSPQLSARSQDSVDGVSPTPTEVLLPGGE) are disordered. The span at 34-44 (NEEHKNSREGS) shows a compositional bias: basic and acidic residues. Positions 54–67 (PTMSPQLSARSQDS) are enriched in polar residues. In terms of domain architecture, DH spans 93–286 (MRKLVLSGVL…QNFLSSINED (194 aa)). Positions 303–462 (QLVKDGFLVE…WREAIQKLQK (160 aa)) constitute a PH domain. Positions 488–616 (VHNVPIISHK…QSKNWHDDVI (129 aa)) constitute a C2 domain. The Rho-GAP domain maps to 650-848 (VKISVVTKRE…YYLQHPPISF (199 aa)).

It localises to the cell projection. It is found in the dendritic spine. Its subcellular location is the axon. The protein resides in the synapse. Protein with a unique structure having two opposing regulatory activities toward small GTP-binding proteins. The C-terminus is a GTPase-activating protein domain which stimulates GTP hydrolysis by RAC1, RAC2 and CDC42. Accelerates the intrinsic rate of GTP hydrolysis of RAC1 or CDC42, leading to down-regulation of the active GTP-bound form. The central Dbl homology (DH) domain functions as guanine nucleotide exchange factor (GEF) that modulates the GTPases CDC42, RHOA and RAC1. Promotes the conversion of CDC42, RHOA and RAC1 from the GDP-bound to the GTP-bound form. The protein is Active breakpoint cluster region-related protein (abr) of Xenopus laevis (African clawed frog).